A 383-amino-acid chain; its full sequence is Lipid-A-disaccharide synthase (383 aa).

Belongs to the LpxB family.

It catalyses the reaction a lipid X + a UDP-2-N,3-O-bis[(3R)-3-hydroxyacyl]-alpha-D-glucosamine = a lipid A disaccharide + UDP + H(+). The protein operates within bacterial outer membrane biogenesis; LPS lipid A biosynthesis. Condensation of UDP-2,3-diacylglucosamine and 2,3-diacylglucosamine-1-phosphate to form lipid A disaccharide, a precursor of lipid A, a phosphorylated glycolipid that anchors the lipopolysaccharide to the outer membrane of the cell. The chain is Lipid-A-disaccharide synthase from Aliivibrio fischeri (strain ATCC 700601 / ES114) (Vibrio fischeri).